Here is a 264-residue protein sequence, read N- to C-terminus: Complement C1q tumor necrosis factor-related protein 6 (264 aa).

The first 24 residues, 1-24 (MRVIMGIASLGFLWAVFLLPLVFG), serve as a signal peptide directing secretion. An N-linked (GlcNAc...) asparagine glycan is attached at N77. The interval 81 to 125 (LKGDKGDRGPTGTPGKPGKNGTRGDRGSQGVKGDKGQAGSPGSSC) is disordered. Positions 83-124 (GDKGDRGPTGTPGKPGKNGTRGDRGSQGVKGDKGQAGSPGSS) constitute a Collagen-like domain. A compositionally biased stretch (low complexity) spans 90 to 100 (PTGTPGKPGKN). One can recognise a C1q domain in the interval 125–264 (CQTHYSAFSV…SGHLIKAEDN (140 aa)).

Its subcellular location is the secreted. In Mus musculus (Mouse), this protein is Complement C1q tumor necrosis factor-related protein 6 (C1qtnf6).